A 331-amino-acid polypeptide reads, in one-letter code: Ferredoxin--NADP reductase (331 aa).

FAD contacts are provided by Thr20, Glu39, Gln47, Tyr52, Val92, Phe126, Asp287, and Ser328.

Belongs to the ferredoxin--NADP reductase type 2 family. As to quaternary structure, homodimer. Requires FAD as cofactor.

The enzyme catalyses 2 reduced [2Fe-2S]-[ferredoxin] + NADP(+) + H(+) = 2 oxidized [2Fe-2S]-[ferredoxin] + NADPH. In Bacillus cereus (strain ZK / E33L), this protein is Ferredoxin--NADP reductase.